Consider the following 225-residue polypeptide: Histone-arginine methyltransferase METTL23 (225 aa).

It belongs to the methyltransferase superfamily. METTL23 family. As to quaternary structure, interacts with HSPA5, HSP90B1, TUBULIN, UGGT1 and UGGT2. Interacts with TET3. Interacts with STPG4.

Its subcellular location is the nucleus. It is found in the cytoplasm. It catalyses the reaction L-arginyl-[protein] + 2 S-adenosyl-L-methionine = N(omega),N(omega)-dimethyl-L-arginyl-[protein] + 2 S-adenosyl-L-homocysteine + 2 H(+). Functionally, histone methyltransferase that dimethylates histone H3 at 'Arg-17', forming asymmetric dimethylarginine (H3R17me2a), leading to activate transcription via chromatin remodeling. Maternal factor involved in epigenetic chromatin reprogramming of the paternal genome in the zygote: mediates H3R17me2a, promoting histone H3.3 incorporation in the male pronucleus, leading to TET3 recruitment and subsequent DNA demethylation. The sequence is that of Histone-arginine methyltransferase METTL23 from Rattus norvegicus (Rat).